Here is a 229-residue protein sequence, read N- to C-terminus: Chromophore lyase CpcT/CpeT 1 (229 aa).

Belongs to the CpcT/CpeT biliprotein lyase family.

Functionally, covalently attaches a chromophore to Cys residue(s) of phycobiliproteins. In Gloeobacter violaceus (strain ATCC 29082 / PCC 7421), this protein is Chromophore lyase CpcT/CpeT 1.